We begin with the raw amino-acid sequence, 209 residues long: Outer-membrane lipoprotein carrier protein (209 aa).

Residues 1–21 (MHRQLRYAVLATALFASTAFA) form the signal peptide.

It belongs to the LolA family. Monomer.

The protein resides in the periplasm. Functionally, participates in the translocation of lipoproteins from the inner membrane to the outer membrane. Only forms a complex with a lipoprotein if the residue after the N-terminal Cys is not an aspartate (The Asp acts as a targeting signal to indicate that the lipoprotein should stay in the inner membrane). This chain is Outer-membrane lipoprotein carrier protein, found in Xanthomonas axonopodis pv. citri (strain 306).